Here is a 205-residue protein sequence, read N- to C-terminus: High frequency lysogenization protein HflD homolog (205 aa).

The protein belongs to the HflD family.

It is found in the cytoplasm. Its subcellular location is the cell inner membrane. This Photobacterium profundum (strain SS9) protein is High frequency lysogenization protein HflD homolog.